The primary structure comprises 496 residues: Squalene epoxidase ERG1 (496 aa).

The chain crosses the membrane as a helical span at residues 4-24 (VKYDAIIIGAGVIGPTIATAF). Residues 15 to 16 (VI), 35 to 36 (ER), Arg-43, Arg-148, Val-164, Asp-332, and Met-345 each bind FAD. Helical transmembrane passes span 431 to 451 (IGLLSGMLPFPMLLFNHFFSV) and 466 to 486 (LGFPLALFEAFEVLFTAIVIF).

The protein belongs to the squalene monooxygenase family. Requires FAD as cofactor.

The protein resides in the microsome membrane. The protein localises to the endoplasmic reticulum membrane. It catalyses the reaction squalene + reduced [NADPH--hemoprotein reductase] + O2 = (S)-2,3-epoxysqualene + oxidized [NADPH--hemoprotein reductase] + H2O + H(+). Its pathway is terpene metabolism; lanosterol biosynthesis; lanosterol from farnesyl diphosphate: step 2/3. Activity is completely abolished by Triton X-100, deoxycholate or Cu(2+), and partially inhibited by thiol reagents, rotenone and antimycin A. The allylamine antimycotic agents naftifine and SF 86-327are potent inhibitors and show apparently non-competitive kinetics with respect to the substrate squalene. Functionally, squalene epoxidase; part of the third module of ergosterol biosynthesis pathway that includes the late steps of the pathway. Erg1 catalyzes the epoxidation of squalene into 2,3-epoxysqualene. The third module or late pathway involves the ergosterol synthesis itself through consecutive reactions that mainly occur in the endoplasmic reticulum (ER) membrane. Firstly, the squalene synthase ERG9 catalyzes the condensation of 2 farnesyl pyrophosphate moieties to form squalene, which is the precursor of all steroids. Squalene synthase is crucial for balancing the incorporation of farnesyl diphosphate (FPP) into sterol and nonsterol isoprene synthesis. Secondly, the squalene epoxidase ERG1 catalyzes the stereospecific oxidation of squalene to (S)-2,3-epoxysqualene, which is considered to be a rate-limiting enzyme in steroid biosynthesis. Then, the lanosterol synthase ERG7 catalyzes the cyclization of (S)-2,3 oxidosqualene to lanosterol, a reaction that forms the sterol core. In the next steps, lanosterol is transformed to zymosterol through a complex process involving various demethylation, reduction and desaturation reactions. The lanosterol 14-alpha-demethylase ERG11 (also known as CYP51) catalyzes C14-demethylation of lanosterol to produce 4,4'-dimethyl cholesta-8,14,24-triene-3-beta-ol, which is critical for ergosterol biosynthesis. The C-14 reductase ERG24 reduces the C14=C15 double bond of 4,4-dimethyl-cholesta-8,14,24-trienol to produce 4,4-dimethyl-cholesta-8,24-dienol. 4,4-dimethyl-cholesta-8,24-dienol is substrate of the C-4 demethylation complex ERG25-ERG26-ERG27 in which ERG25 catalyzes the three-step monooxygenation required for the demethylation of 4,4-dimethyl and 4alpha-methylsterols, ERG26 catalyzes the oxidative decarboxylation that results in a reduction of the 3-beta-hydroxy group at the C-3 carbon to an oxo group, and ERG27 is responsible for the reduction of the keto group on the C-3. ERG28 has a role as a scaffold to help anchor ERG25, ERG26 and ERG27 to the endoplasmic reticulum and ERG29 regulates the activity of the iron-containing C4-methylsterol oxidase ERG25. Then, the sterol 24-C-methyltransferase ERG6 catalyzes the methyl transfer from S-adenosyl-methionine to the C-24 of zymosterol to form fecosterol. The C-8 sterol isomerase ERG2 catalyzes the reaction which results in unsaturation at C-7 in the B ring of sterols and thus converts fecosterol to episterol. The sterol-C5-desaturase ERG3 then catalyzes the introduction of a C-5 double bond in the B ring to produce 5-dehydroepisterol. The C-22 sterol desaturase ERG5 further converts 5-dehydroepisterol into ergosta-5,7,22,24(28)-tetraen-3beta-ol by forming the C-22(23) double bond in the sterol side chain. Finally, ergosta-5,7,22,24(28)-tetraen-3beta-ol is substrate of the C-24(28) sterol reductase ERG4 to produce ergosterol. This chain is Squalene epoxidase ERG1, found in Candida albicans (strain SC5314 / ATCC MYA-2876) (Yeast).